The primary structure comprises 349 residues: Anthranilate phosphoribosyltransferase (349 aa).

5-phospho-alpha-D-ribose 1-diphosphate-binding positions include Gly82, 85–86, 92–95, 110–118, and Ser122; these read GD, NVST, and KHGNRAVSG. Gly82 is a binding site for anthranilate. Ser94 lines the Mg(2+) pocket. An anthranilate-binding site is contributed by Asn113. Residue Arg168 participates in anthranilate binding. 2 residues coordinate Mg(2+): Asp227 and Glu228.

This sequence belongs to the anthranilate phosphoribosyltransferase family. In terms of assembly, homodimer. The cofactor is Mg(2+).

The catalysed reaction is N-(5-phospho-beta-D-ribosyl)anthranilate + diphosphate = 5-phospho-alpha-D-ribose 1-diphosphate + anthranilate. The protein operates within amino-acid biosynthesis; L-tryptophan biosynthesis; L-tryptophan from chorismate: step 2/5. Functionally, catalyzes the transfer of the phosphoribosyl group of 5-phosphorylribose-1-pyrophosphate (PRPP) to anthranilate to yield N-(5'-phosphoribosyl)-anthranilate (PRA). This chain is Anthranilate phosphoribosyltransferase, found in Pseudomonas fluorescens (strain ATCC BAA-477 / NRRL B-23932 / Pf-5).